The primary structure comprises 511 residues: MNMKKATIVSAAGIAVTAFAAPSVVSANTVVVASGDTLWGIASKTGTTVDQLKQLNKLDSDRIVPGQKLTIKEVAAQKVEKSVSATWLNVRHAPDANEKILTSLKGRTVVKVESSEANGWNKISFDNGKTGYVNGKYLSDAKVAAPVVTKAVTHKAEAKVAATSTHAVKVDTNASTYKVKSGDTIWALSVKYGVPVQKLIEWNNLSSSSIYVGQTIAVKEAAAKAAPTTVKQAAPAKVAPKQEVKQTAPAKQEQAKPAAKETVKPAVSKPKAATPAPTAKPAVEQKASTPAVDTNAATYKVQNGDSLGKIASLFKVSVADLTNWNNLNATITIYAGQELSVKASAAKPKPAAPAKPAVSKPATSTPAKVTPTNTTNNSTPTTNVNNNTSQSSSASFSALYAEAKKHLGKPYTWGARGPSTFDCSGFTSYVFNQVGLSLSGNSATQYANSTKISESQAQPGDLVFFNYGSGIAHVGIYIGGGQMIDAQDNGVSIDNIHGNGWGQYLVGFGRV.

An N-terminal signal peptide occupies residues 1–27 (MNMKKATIVSAAGIAVTAFAAPSVVSA). The LysM 1 domain maps to 28-71 (NTVVVASGDTLWGIASKTGTTVDQLKQLNKLDSDRIVPGQKLTI). An SH3b domain is found at 78–142 (KVEKSVSATW…VNGKYLSDAK (65 aa)). In terms of domain architecture, LysM 2 spans 175 to 218 (STYKVKSGDTIWALSVKYGVPVQKLIEWNNLSSSSIYVGQTIAV). Composition is skewed to low complexity over residues 229–257 (TVKQ…QAKP) and 264–282 (KPAV…AKPA). The disordered stretch occupies residues 229–291 (TVKQAAPAKV…AVEQKASTPA (63 aa)). The region spanning 297 to 341 (ATYKVQNGDSLGKIASLFKVSVADLTNWNNLNATITIYAGQELSV) is the LysM 3 domain. Composition is skewed to low complexity over residues 347-362 (KPKP…SKPA) and 372-390 (TNTT…NTSQ). The disordered stretch occupies residues 347–390 (KPKPAAPAKPAVSKPATSTPAKVTPTNTTNNSTPTTNVNNNTSQ). Residues 393–511 (SASFSALYAE…GQYLVGFGRV (119 aa)) enclose the NlpC/P60 domain. C423 acts as the Nucleophile in catalysis. Residue H473 is the Proton acceptor of the active site. Residue D485 is part of the active site.

Belongs to the peptidase C40 family.

This major extracellular protein may be involved in the invasion of non-professional phagocytic cells by Listeria. The polypeptide is Probable endopeptidase p60 (iap) (Listeria grayi (Listeria murrayi)).